The sequence spans 576 residues: Protein HYPER-SENSITIVITY-RELATED 4 (576 aa).

Residues 55-75 (LATAKTVLTTAASVAATAMLA) traverse the membrane as a helical segment. 306-313 (GPPGTGKS) is an ATP binding site. The disordered stretch occupies residues 508–532 (DKAKTEKQELENKKKTKEGTDSVVK).

Belongs to the AAA ATPase family. BCS1 subfamily. As to quaternary structure, binds to the Yariv phenylglycoside (beta-D-Glc)(3). Requires Mg(2+) as cofactor.

It is found in the membrane. It catalyses the reaction ATP + H2O = ADP + phosphate + H(+). This is Protein HYPER-SENSITIVITY-RELATED 4 from Arabidopsis thaliana (Mouse-ear cress).